The following is a 436-amino-acid chain: GTPase Der (436 aa).

2 consecutive EngA-type G domains span residues 4–167 and 175–351; these read PTVA…PVEE and IRFS…ESQN. GTP-binding positions include 10-17, 57-61, 119-122, 181-188, 229-233, and 294-297; these read GRPNVGKS, DTGGI, NKVD, DTAGM, and NKWD. In terms of domain architecture, KH-like spans 352-436; the sequence is KRIPSAVLND…PINLIARKRK (85 aa).

It belongs to the TRAFAC class TrmE-Era-EngA-EngB-Septin-like GTPase superfamily. EngA (Der) GTPase family. In terms of assembly, associates with the 50S ribosomal subunit.

Its function is as follows. GTPase that plays an essential role in the late steps of ribosome biogenesis. The polypeptide is GTPase Der (Streptococcus agalactiae serotype III (strain NEM316)).